A 187-amino-acid polypeptide reads, in one-letter code: Ribosome maturation factor RimM (187 aa).

One can recognise a PRC barrel domain in the interval 91–183 (DDGFYDHELE…ILVLTPPEGL (93 aa)).

It belongs to the RimM family. As to quaternary structure, binds ribosomal protein uS19.

It localises to the cytoplasm. An accessory protein needed during the final step in the assembly of 30S ribosomal subunit, possibly for assembly of the head region. Essential for efficient processing of 16S rRNA. May be needed both before and after RbfA during the maturation of 16S rRNA. It has affinity for free ribosomal 30S subunits but not for 70S ribosomes. This Corynebacterium jeikeium (strain K411) protein is Ribosome maturation factor RimM.